A 279-amino-acid chain; its full sequence is Probable autolysin LDP (279 aa).

Residues 1 to 24 form the signal peptide; the sequence is MKKSLTVTVSSVLAFLALNNAAHA. Positions 51-94 constitute a LysM domain; it reads TTYTVVAGDSLYKIALEHHLTLNQLYSYNPGVTPLIFPGDVISL. The Peptidase C51 domain occupies 158 to 279; the sequence is VPTVPVAHNY…LNPGKYNYIH (122 aa).

It carries out the reaction Hydrolyzes the link between N-acetylmuramoyl residues and L-amino acid residues in certain cell-wall glycopeptides.. Its function is as follows. Has weak lytic activity toward S.aureus cells. The protein is Probable autolysin LDP of Staphylococcus aureus (strain NCTC 8325 / PS 47).